The sequence spans 379 residues: Succinyl-diaminopimelate desuccinylase (379 aa).

Residue His-70 participates in Zn(2+) binding. Asp-72 is an active-site residue. Asp-103 serves as a coordination point for Zn(2+). Glu-137 serves as the catalytic Proton acceptor. 3 residues coordinate Zn(2+): Glu-138, Glu-166, and His-352.

It belongs to the peptidase M20A family. DapE subfamily. Homodimer. Requires Zn(2+) as cofactor. Co(2+) serves as cofactor.

The catalysed reaction is N-succinyl-(2S,6S)-2,6-diaminopimelate + H2O = (2S,6S)-2,6-diaminopimelate + succinate. It participates in amino-acid biosynthesis; L-lysine biosynthesis via DAP pathway; LL-2,6-diaminopimelate from (S)-tetrahydrodipicolinate (succinylase route): step 3/3. Catalyzes the hydrolysis of N-succinyl-L,L-diaminopimelic acid (SDAP), forming succinate and LL-2,6-diaminopimelate (DAP), an intermediate involved in the bacterial biosynthesis of lysine and meso-diaminopimelic acid, an essential component of bacterial cell walls. In Burkholderia orbicola (strain MC0-3), this protein is Succinyl-diaminopimelate desuccinylase.